Reading from the N-terminus, the 334-residue chain is DNA-directed RNA polymerase subunit alpha (334 aa).

The interval 1–232 is alpha N-terminal domain (alpha-NTD); sequence MIREKLKVST…DLFIPFLHAE (232 aa). The alpha C-terminal domain (alpha-CTD) stretch occupies residues 267–334; that stretch reads QKEITLKSIF…NILQIENHFV (68 aa).

This sequence belongs to the RNA polymerase alpha chain family. As to quaternary structure, in plastids the minimal PEP RNA polymerase catalytic core is composed of four subunits: alpha, beta, beta', and beta''. When a (nuclear-encoded) sigma factor is associated with the core the holoenzyme is formed, which can initiate transcription.

It is found in the plastid. The protein resides in the chloroplast. The enzyme catalyses RNA(n) + a ribonucleoside 5'-triphosphate = RNA(n+1) + diphosphate. Its function is as follows. DNA-dependent RNA polymerase catalyzes the transcription of DNA into RNA using the four ribonucleoside triphosphates as substrates. The sequence is that of DNA-directed RNA polymerase subunit alpha from Pisum sativum (Garden pea).